A 369-amino-acid polypeptide reads, in one-letter code: uncharacterized protein (369 aa).

Lysine 184 is subject to N6-(pyridoxal phosphate)lysine.

The protein belongs to the class-V pyridoxal-phosphate-dependent aminotransferase family. It depends on pyridoxal 5'-phosphate as a cofactor.

This is an uncharacterized protein from Helicobacter pylori (strain J99 / ATCC 700824) (Campylobacter pylori J99).